A 474-amino-acid polypeptide reads, in one-letter code: tRNA-2-methylthio-N(6)-dimethylallyladenosine synthase (474 aa).

Residues 3–120 enclose the MTTase N-terminal domain; that stretch reads KKLHIKTWGC…LPEMINSVRG (118 aa). [4Fe-4S] cluster-binding residues include Cys12, Cys49, Cys83, Cys157, Cys161, and Cys164. The Radical SAM core domain occupies 143–375; sequence RAEGPTAFVS…QERINQQAMA (233 aa). Positions 378 to 441 constitute a TRAM domain; that stretch reads RRMLGTVQRI…TNSLRGKIVR (64 aa).

This sequence belongs to the methylthiotransferase family. MiaB subfamily. Monomer. Requires [4Fe-4S] cluster as cofactor.

It localises to the cytoplasm. It catalyses the reaction N(6)-dimethylallyladenosine(37) in tRNA + (sulfur carrier)-SH + AH2 + 2 S-adenosyl-L-methionine = 2-methylsulfanyl-N(6)-dimethylallyladenosine(37) in tRNA + (sulfur carrier)-H + 5'-deoxyadenosine + L-methionine + A + S-adenosyl-L-homocysteine + 2 H(+). In terms of biological role, catalyzes the methylthiolation of N6-(dimethylallyl)adenosine (i(6)A), leading to the formation of 2-methylthio-N6-(dimethylallyl)adenosine (ms(2)i(6)A) at position 37 in tRNAs that read codons beginning with uridine. This Klebsiella pneumoniae subsp. pneumoniae (strain ATCC 700721 / MGH 78578) protein is tRNA-2-methylthio-N(6)-dimethylallyladenosine synthase.